The sequence spans 261 residues: MRLEMIGLRTWLLATVVGWALLVCVLAVAGLGKRVELLPDDPALVQRLPALPAPAPERLGPFEKYAEIAAHPAFAEDRLPHPFFLSGNDGSGAASTVRLTGVLLTSTFKMATLTLDPADSVRVQLGGDAVKGYRLLALQPRSATIEGPGGTQTLELQVFNGQGGQPPTAIGGRPQAPGAVPPLPPNVPPAPATPAPPPAEVPQQQPGGQAPPTVPPQRSDGAQEAPRPSDEQMRAIRERIEARRRQLQQQRQGGSTPGQTQ.

Over 1 to 10 (MRLEMIGLRT) the chain is Cytoplasmic. A helical membrane pass occupies residues 11–31 (WLLATVVGWALLVCVLAVAGL). The Periplasmic portion of the chain corresponds to 32–261 (GKRVELLPDD…QGGSTPGQTQ (230 aa)). Residues 158-261 (VFNGQGGQPP…QGGSTPGQTQ (104 aa)) form a disordered region. Over residues 179–200 (AVPPLPPNVPPAPATPAPPPAE) the composition is skewed to pro residues. A compositionally biased stretch (low complexity) spans 201–211 (VPQQQPGGQAP). Basic and acidic residues predominate over residues 227-244 (RPSDEQMRAIRERIEARR).

In terms of assembly, binds to XpsD.

The protein resides in the cell inner membrane. In terms of biological role, involved in a general secretion pathway (GSP) for the export of proteins. The protein is General secretion pathway protein N (xpsN) of Xanthomonas campestris pv. campestris (strain ATCC 33913 / DSM 3586 / NCPPB 528 / LMG 568 / P 25).